The sequence spans 292 residues: Mycothiol acetyltransferase (292 aa).

N-acetyltransferase domains follow at residues 13–168 (ALDR…KWLQ) and 159–292 (KSVA…VYEK). Residue Glu40 participates in 1D-myo-inositol 2-(L-cysteinylamino)-2-deoxy-alpha-D-glucopyranoside binding. 77–79 (LAV) contributes to the acetyl-CoA binding site. Glu179, Lys218, and Glu226 together coordinate 1D-myo-inositol 2-(L-cysteinylamino)-2-deoxy-alpha-D-glucopyranoside. Residues 230 to 232 (VGL) and 237 to 243 (RGRGLGD) contribute to the acetyl-CoA site. Tyr264 lines the 1D-myo-inositol 2-(L-cysteinylamino)-2-deoxy-alpha-D-glucopyranoside pocket.

This sequence belongs to the acetyltransferase family. MshD subfamily. In terms of assembly, monomer.

It carries out the reaction 1D-myo-inositol 2-(L-cysteinylamino)-2-deoxy-alpha-D-glucopyranoside + acetyl-CoA = mycothiol + CoA + H(+). Its function is as follows. Catalyzes the transfer of acetyl from acetyl-CoA to desacetylmycothiol (Cys-GlcN-Ins) to form mycothiol. This chain is Mycothiol acetyltransferase, found in Corynebacterium glutamicum (strain ATCC 13032 / DSM 20300 / JCM 1318 / BCRC 11384 / CCUG 27702 / LMG 3730 / NBRC 12168 / NCIMB 10025 / NRRL B-2784 / 534).